Reading from the N-terminus, the 122-residue chain is Protein FLORAL ORGAN NUMBER2 (122 aa).

Positions 1-25 are cleaved as a signal peptide; it reads MGRLFLCLVVAWCWVALLLVAPVHG. The segment at 28–122 is disordered; that stretch reads GLPGEFSGDQ…PEHARSTGRP (95 aa). Basic residues predominate over residues 54 to 63; it reads KQPRGVKGTR. Over residues 64–77 the composition is skewed to low complexity; the sequence is RPSWSSWSSTASRS. The segment covering 111–122 has biased composition (basic and acidic residues); the sequence is RRPEHARSTGRP.

This sequence belongs to the CLV3/ESR signal peptide family.

It localises to the secreted. Its function is as follows. Probable extracellular signal that regulates meristem maintenance. May function as a putative ligand for a receptor complex including FON1. Regulates the size of the floral meristem and the number of floral organs. The protein is Protein FLORAL ORGAN NUMBER2 (FON2) of Oryza sativa subsp. indica (Rice).